Here is a 1495-residue protein sequence, read N- to C-terminus: Nuclear pore complex protein NUP160 (1495 aa).

As to quaternary structure, part of the nuclear pore complex (NPC). The NPC has an eight-fold symmetrical structure comprising a central transport channel and two rings, the cytoplasmic and nuclear rings, to which eight filaments are attached. The cytoplasmic filaments have loose ends, while the nuclear filaments are joined in a distal ring, forming a nuclear basket. NPCs are highly dynamic in configuration and composition, and can be devided in 3 subcomplexes, the NUP62 subcomplex, the NUP107-160 subcomplex and the NUP93 subcomplex, containing approximately 30 different nucleoporin proteins. As to expression, expressed in roots, stems, anthers, siliques and vascular tissues of cotyledons, leaves and hypocotyls.

The protein resides in the nucleus membrane. Its subcellular location is the nucleus. The protein localises to the nuclear pore complex. In terms of biological role, contributes to the transfer of mature mRNA from the nucleus to the cytosol. Required for both R gene-mediated and basal disease resistance. RNA export seems to play a critical role in stress responses and regulation of plant growth and development. Required for proper expression of factors associated with auxin signaling. The protein is Nuclear pore complex protein NUP160 of Arabidopsis thaliana (Mouse-ear cress).